A 376-amino-acid polypeptide reads, in one-letter code: Partitioning defective 6 homolog gamma (376 aa).

Residues 18 to 98 enclose the PB1 domain; that stretch reads AVEVKSKFGA…PLLRVFIQKR (81 aa). Positions 127 to 254 are interaction with PARD3 and CDC42; it reads RRRAHLDIGL…VTVKPANQRN (128 aa). Residues 134–151 form the Pseudo-CRIB domain; that stretch reads IGLPRDFRPVSSIIDVDL. In terms of domain architecture, PDZ spans 158–251; the sequence is RVRLHRHGCE…NLIVTVKPAN (94 aa). Positions 356–376 are disordered; that stretch reads PRHSLALPPGGVEEHGPAVTL. Positions 367-376 are enriched in basic and acidic residues; the sequence is VEEHGPAVTL.

The protein belongs to the PAR6 family. As to quaternary structure, interacts with PARD3. Interacts with GTP-bound forms of CDC42, RHOQ/TC10 and RAC1. Interacts with the N-terminal part of PRKCI and PRKCZ. Widely expressed, with a higher expression in fetal and adult kidney.

The protein resides in the cytoplasm. Its subcellular location is the cell membrane. It localises to the cell junction. The protein localises to the tight junction. In terms of biological role, adapter protein involved in asymmetrical cell division and cell polarization processes. May play a role in the formation of epithelial tight junctions. The PARD6-PARD3 complex links GTP-bound Rho small GTPases to atypical protein kinase C proteins. The sequence is that of Partitioning defective 6 homolog gamma (PARD6G) from Homo sapiens (Human).